We begin with the raw amino-acid sequence, 254 residues long: 3-dehydroquinate dehydratase (254 aa).

3-dehydroquinate is bound by residues 47-49 (EFR) and Arg83. The active-site Proton donor/acceptor is the His144. The active-site Schiff-base intermediate with substrate is the Lys171. The 3-dehydroquinate site is built by Arg213, Ser232, and Gln236.

Belongs to the type-I 3-dehydroquinase family. In terms of assembly, homodimer.

It catalyses the reaction 3-dehydroquinate = 3-dehydroshikimate + H2O. It functions in the pathway metabolic intermediate biosynthesis; chorismate biosynthesis; chorismate from D-erythrose 4-phosphate and phosphoenolpyruvate: step 3/7. In terms of biological role, involved in the third step of the chorismate pathway, which leads to the biosynthesis of aromatic amino acids. Catalyzes the cis-dehydration of 3-dehydroquinate (DHQ) and introduces the first double bond of the aromatic ring to yield 3-dehydroshikimate. In Neisseria meningitidis serogroup B (strain ATCC BAA-335 / MC58), this protein is 3-dehydroquinate dehydratase.